Reading from the N-terminus, the 262-residue chain is Acyl-[acyl-carrier-protein]--UDP-N-acetylglucosamine O-acyltransferase (262 aa).

This sequence belongs to the transferase hexapeptide repeat family. LpxA subfamily. In terms of assembly, homotrimer.

The protein resides in the cytoplasm. It catalyses the reaction a (3R)-hydroxyacyl-[ACP] + UDP-N-acetyl-alpha-D-glucosamine = a UDP-3-O-[(3R)-3-hydroxyacyl]-N-acetyl-alpha-D-glucosamine + holo-[ACP]. It participates in glycolipid biosynthesis; lipid IV(A) biosynthesis; lipid IV(A) from (3R)-3-hydroxytetradecanoyl-[acyl-carrier-protein] and UDP-N-acetyl-alpha-D-glucosamine: step 1/6. Involved in the biosynthesis of lipid A, a phosphorylated glycolipid that anchors the lipopolysaccharide to the outer membrane of the cell. The protein is Acyl-[acyl-carrier-protein]--UDP-N-acetylglucosamine O-acyltransferase of Blochmanniella floridana.